The primary structure comprises 1073 residues: PX domain-containing protein LEC1 (1073 aa).

Residues 218–228 (CTESVDNDKSS) show a composition bias toward basic and acidic residues. Residues 218–240 (CTESVDNDKSSKSTPTSSPKSHA) are disordered. Over residues 229–238 (KSTPTSSPKS) the composition is skewed to low complexity. One can recognise a PX domain in the interval 273–506 (LFSKLSLGVP…RFFLSGPNLD (234 aa)). Phosphoserine occurs at positions 310 and 451. The tract at residues 431–456 (IKEEDNIDEDEYEEEGEGEESDFDEY) is disordered. Over residues 432–453 (KEEDNIDEDEYEEEGEGEESDF) the composition is skewed to acidic residues.

It localises to the endoplasmic reticulum membrane. The protein resides in the lipid droplet. Its function is as follows. Phosphoinositide-binding protein that plays a role in regulation of ergosterol distribution in the cell. Facilitates ergosterol transport between plasma membrane and lipid droplets. In Saccharomyces cerevisiae (strain ATCC 204508 / S288c) (Baker's yeast), this protein is PX domain-containing protein LEC1.